We begin with the raw amino-acid sequence, 317 residues long: Ribosomal protein L11 methyltransferase (317 aa).

Thr158, Gly179, Asp201, and Asn244 together coordinate S-adenosyl-L-methionine.

Belongs to the methyltransferase superfamily. PrmA family.

Its subcellular location is the cytoplasm. It carries out the reaction L-lysyl-[protein] + 3 S-adenosyl-L-methionine = N(6),N(6),N(6)-trimethyl-L-lysyl-[protein] + 3 S-adenosyl-L-homocysteine + 3 H(+). Methylates ribosomal protein L11. The polypeptide is Ribosomal protein L11 methyltransferase (Streptococcus pyogenes serotype M1).